We begin with the raw amino-acid sequence, 392 residues long: uncharacterized protein (392 aa).

It belongs to the chlamydial CPn_0675/CT_696/TC_0068 family.

This is an uncharacterized protein from Chlamydia trachomatis serovar D (strain ATCC VR-885 / DSM 19411 / UW-3/Cx).